The primary structure comprises 203 residues: Enterotoxin-like toxin X (203 aa).

The protein belongs to the staphylococcal/streptococcal toxin family.

Its subcellular location is the secreted. In terms of biological role, plays a role in the inhibition of the host innate immune system. Inhibits phagocytosis and killing by human neutrophils by interacting with multiple neutrophil surface glycoproteins in a sialic acid-dependent manner. The protein is Enterotoxin-like toxin X of Staphylococcus aureus (strain NCTC 8325 / PS 47).